Here is a 323-residue protein sequence, read N- to C-terminus: Aldo-keto reductase family 1 member C4 (323 aa).

NADP(+)-binding positions include 20–24 (GFGTY) and Asp-50. The Proton donor role is filled by Tyr-55. His-117 serves as a coordination point for substrate. NADP(+) contacts are provided by residues 166-167 (SN), Gln-190, 216-221 (HSALGT), and 270-280 (KSYNEQRIREN).

It belongs to the aldo/keto reductase family. As to quaternary structure, monomer.

Its subcellular location is the cytoplasm. The protein localises to the cytosol. It carries out the reaction chlordecone alcohol + NADP(+) = chlordecone + NADPH + H(+). The catalysed reaction is a 3alpha-hydroxysteroid + NADP(+) = a 3-oxosteroid + NADPH + H(+). It catalyses the reaction a 3alpha-hydroxysteroid + NAD(+) = a 3-oxosteroid + NADH + H(+). The enzyme catalyses 5alpha-androstane-3alpha,17beta-diol + NADP(+) = 17beta-hydroxy-5alpha-androstan-3-one + NADPH + H(+). It carries out the reaction 5alpha-androstane-3beta,17beta-diol + NADP(+) = 17beta-hydroxy-5alpha-androstan-3-one + NADPH + H(+). The catalysed reaction is 5alpha-androstane-3alpha,17beta-diol + NAD(+) = 17beta-hydroxy-5alpha-androstan-3-one + NADH + H(+). It catalyses the reaction 17beta-estradiol + NADP(+) = estrone + NADPH + H(+). The enzyme catalyses 17beta-estradiol + NAD(+) = estrone + NADH + H(+). It carries out the reaction (20S)-hydroxypregn-4-en-3-one + NADP(+) = progesterone + NADPH + H(+). The catalysed reaction is (20S)-hydroxypregn-4-en-3-one + NAD(+) = progesterone + NADH + H(+). It catalyses the reaction androsterone + NADP(+) = 5alpha-androstan-3,17-dione + NADPH + H(+). The enzyme catalyses testosterone + NADP(+) = androst-4-ene-3,17-dione + NADPH + H(+). It carries out the reaction testosterone + NAD(+) = androst-4-ene-3,17-dione + NADH + H(+). The catalysed reaction is 3alpha-hydroxy-5alpha-androstane 17-O-(beta-D-glucuronate) + NADP(+) = 5alpha-dihydrotestosterone 17-O-(beta-D-glucuronate) + NADPH + H(+). It catalyses the reaction (3beta,5alpha,17beta)-3-hydroxy-androstan-17-yl sulfate + NADP(+) = 5alpha-dihydrotestosterone sulfate + NADPH + H(+). The enzyme catalyses 5alpha-androstane-3alpha,17beta-diol + NAD(+) = androsterone + NADH + H(+). Its pathway is steroid metabolism. In terms of biological role, cytosolic aldo-keto reductase that catalyzes the NADH and NADPH-dependent reduction of ketosteroids to hydroxysteroids. Liver specific enzyme that acts as an NAD(P)(H)-dependent 3-, 17- and 20-ketosteroid reductase on the steroid nucleus and side chain. Displays the ability to catalyze both oxidation and reduction in vitro, but most probably acts as a reductase in vivo since the oxidase activity measured in vitro is inhibited by physiological concentration of NADPH. Acts preferentially as a 3-alpha-hydroxysteroid dehydrogenase (HSD) with a subsidiary 3-beta-HSD activity. Catalyzes efficiently the transformation of the potent androgen 5-alpha-dihydrotestosterone (5alpha-DHT or 17beta-hydroxy-5alpha-androstan-3-one) into the less active form, 5-alpha-androstan-3-alpha,17-beta-diol (3-alpha-diol). Catalyzes the reduction of estrone into 17beta-estradiol but with low efficiency. Metabolizes a broad spectrum of natural and synthetic therapeutic steroid and plays an important role in metabolism of androgens, estrogens, progestereone and conjugated steroids. Catalyzes the biotransformation of the pesticide chlordecone (kepone) to its corresponding alcohol leading to increased biliary excretion of the pesticide and concomitant reduction of its neurotoxicity since bile is the major excretory route. The polypeptide is Aldo-keto reductase family 1 member C4 (AKR1C4) (Macaca fascicularis (Crab-eating macaque)).